A 217-amino-acid chain; its full sequence is Cytochrome c biogenesis ATP-binding export protein CcmA (217 aa).

The 211-residue stretch at 6–216 (LQLEQLACQR…QYKFFDQGNM (211 aa)) folds into the ABC transporter domain. 38 to 45 (GHNGIGKT) lines the ATP pocket.

Belongs to the ABC transporter superfamily. CcmA exporter (TC 3.A.1.107) family. The complex is composed of two ATP-binding proteins (CcmA) and two transmembrane proteins (CcmB).

Its subcellular location is the cell inner membrane. The enzyme catalyses heme b(in) + ATP + H2O = heme b(out) + ADP + phosphate + H(+). In terms of biological role, part of the ABC transporter complex CcmAB involved in the biogenesis of c-type cytochromes; once thought to export heme, this seems not to be the case, but its exact role is uncertain. Responsible for energy coupling to the transport system. The sequence is that of Cytochrome c biogenesis ATP-binding export protein CcmA from Histophilus somni (strain 129Pt) (Haemophilus somnus).